The sequence spans 233 residues: Ribonuclease 3 (233 aa).

In terms of domain architecture, RNase III spans 4–126 (LNKLMERLGH…IVGAIYIDAG (123 aa)). Glu39 contacts Mg(2+). The active site involves Asp43. Mg(2+)-binding residues include Asp112 and Glu115. Glu115 is a catalytic residue. The DRBM domain occupies 153-222 (DAKSLLQEWL…AKRFLELLDD (70 aa)).

This sequence belongs to the ribonuclease III family. Homodimer. Mg(2+) is required as a cofactor.

It localises to the cytoplasm. It catalyses the reaction Endonucleolytic cleavage to 5'-phosphomonoester.. Digests double-stranded RNA. Involved in the processing of primary rRNA transcript to yield the immediate precursors to the large and small rRNAs (23S and 16S). Processes some mRNAs, and tRNAs when they are encoded in the rRNA operon. Processes pre-crRNA and tracrRNA of type II CRISPR loci if present in the organism. This is Ribonuclease 3 from Coxiella burnetii (strain RSA 331 / Henzerling II).